The primary structure comprises 43 residues: Hainantoxin F5-22.36 (43 aa).

3 cysteine pairs are disulfide-bonded: cysteine 1-cysteine 19, cysteine 8-cysteine 24, and cysteine 18-cysteine 38.

Belongs to the neurotoxin 14 (magi-1) family. 02 (HWTX-XVIc) subfamily. Expressed by the venom gland.

It is found in the secreted. Its function is as follows. Probable ion channel inhibitor. The sequence is that of Hainantoxin F5-22.36 from Cyriopagopus hainanus (Chinese bird spider).